The primary structure comprises 545 residues: CTP synthase (545 aa).

Residues Met-1–Leu-266 are amidoligase domain. Ser-14 provides a ligand contact to CTP. Ser-14 is a binding site for UTP. ATP-binding positions include Ser-15–Ile-20 and Asp-72. Mg(2+)-binding residues include Asp-72 and Glu-140. Residues Asp-147–Glu-149, Lys-187–Gln-192, and Lys-223 contribute to the CTP site. UTP-binding positions include Lys-187–Gln-192 and Lys-223. Lys-239 to Val-241 is a binding site for ATP. Residues Thr-291–Arg-542 enclose the Glutamine amidotransferase type-1 domain. Gly-352 contributes to the L-glutamine binding site. Cys-379 acts as the Nucleophile; for glutamine hydrolysis in catalysis. L-glutamine contacts are provided by residues Leu-380–Gln-383, Glu-403, and Arg-470. Active-site residues include His-515 and Glu-517.

The protein belongs to the CTP synthase family. Homotetramer.

It carries out the reaction UTP + L-glutamine + ATP + H2O = CTP + L-glutamate + ADP + phosphate + 2 H(+). The enzyme catalyses L-glutamine + H2O = L-glutamate + NH4(+). It catalyses the reaction UTP + NH4(+) + ATP = CTP + ADP + phosphate + 2 H(+). Its pathway is pyrimidine metabolism; CTP biosynthesis via de novo pathway; CTP from UDP: step 2/2. Its activity is regulated as follows. Allosterically activated by GTP, when glutamine is the substrate; GTP has no effect on the reaction when ammonia is the substrate. The allosteric effector GTP functions by stabilizing the protein conformation that binds the tetrahedral intermediate(s) formed during glutamine hydrolysis. Inhibited by the product CTP, via allosteric rather than competitive inhibition. Catalyzes the ATP-dependent amination of UTP to CTP with either L-glutamine or ammonia as the source of nitrogen. Regulates intracellular CTP levels through interactions with the four ribonucleotide triphosphates. This Salmonella arizonae (strain ATCC BAA-731 / CDC346-86 / RSK2980) protein is CTP synthase.